The primary structure comprises 132 residues: Small ribosomal subunit protein uS8c (132 aa).

Belongs to the universal ribosomal protein uS8 family. Part of the 30S ribosomal subunit.

It is found in the plastid. The protein resides in the chloroplast. In terms of biological role, one of the primary rRNA binding proteins, it binds directly to 16S rRNA central domain where it helps coordinate assembly of the platform of the 30S subunit. This chain is Small ribosomal subunit protein uS8c (rps8), found in Physcomitrium patens (Spreading-leaved earth moss).